We begin with the raw amino-acid sequence, 73 residues long: Antimicrobial peptide lumbricin-PG (73 aa).

An N-terminal signal peptide occupies residues 1–14; that stretch reads MLLTISDFLFLSLT. The tract at residues 25-48 is disordered; that stretch reads RPWSDRKNNYSGPQFTYPPEKAPP.

The protein resides in the secreted. Its function is as follows. Displays antimicrobial activity against the Gram-positive bacterium S.aureus ATCC 2592, the Gram-negative bacteria E.coli ATCC 25922 and P.aeruginosa ATCC 27853, and the fungus C.albicans ATCC 2002. Displays stronger activity against P.aeruginosa and S.aureus than E.coli. Displays very weak hemolytic activity. This Metaphire guillelmi (Earthworm) protein is Antimicrobial peptide lumbricin-PG.